Reading from the N-terminus, the 165-residue chain is 3-hydroxyacyl-[acyl-carrier-protein] dehydratase FabZ (165 aa).

Residue H68 is part of the active site.

The protein belongs to the thioester dehydratase family. FabZ subfamily.

It is found in the cytoplasm. The catalysed reaction is a (3R)-hydroxyacyl-[ACP] = a (2E)-enoyl-[ACP] + H2O. Involved in unsaturated fatty acids biosynthesis. Catalyzes the dehydration of short chain beta-hydroxyacyl-ACPs and long chain saturated and unsaturated beta-hydroxyacyl-ACPs. This Methylobacterium sp. (strain 4-46) protein is 3-hydroxyacyl-[acyl-carrier-protein] dehydratase FabZ.